A 574-amino-acid polypeptide reads, in one-letter code: Cyclomaltodextrinase (574 aa).

Positions 144, 146, 149, 150, 168, and 170 each coordinate Ca(2+). Substrate is bound by residues His-243 and Arg-323. The active-site Nucleophile is Asp-325. Glu-354 acts as the Proton donor in catalysis. Residues 420-421 (HD), Asp-465, and Arg-469 contribute to the substrate site.

Belongs to the glycosyl hydrolase 13 family. As to quaternary structure, monomer. It depends on Ca(2+) as a cofactor.

The catalysed reaction is cyclomaltodextrin + H2O = linear maltodextrin. Hydrolyzes cyclodextrins. Can also act on linear maltodextrins, with the exception of maltose. This Thermoanaerobacter pseudethanolicus (strain ATCC 33223 / 39E) (Clostridium thermohydrosulfuricum) protein is Cyclomaltodextrinase.